The following is a 312-amino-acid chain: Aspartate carbamoyltransferase catalytic subunit (312 aa).

Carbamoyl phosphate is bound by residues Arg62 and Thr63. An L-aspartate-binding site is contributed by Lys90. Carbamoyl phosphate contacts are provided by Arg112, His140, and Gln143. Positions 173 and 228 each coordinate L-aspartate. Carbamoyl phosphate is bound by residues Gly269 and Pro270.

It belongs to the aspartate/ornithine carbamoyltransferase superfamily. ATCase family. In terms of assembly, heterododecamer (2C3:3R2) of six catalytic PyrB chains organized as two trimers (C3), and six regulatory PyrI chains organized as three dimers (R2).

The enzyme catalyses carbamoyl phosphate + L-aspartate = N-carbamoyl-L-aspartate + phosphate + H(+). Its pathway is pyrimidine metabolism; UMP biosynthesis via de novo pathway; (S)-dihydroorotate from bicarbonate: step 2/3. Catalyzes the condensation of carbamoyl phosphate and aspartate to form carbamoyl aspartate and inorganic phosphate, the committed step in the de novo pyrimidine nucleotide biosynthesis pathway. This Deinococcus geothermalis (strain DSM 11300 / CIP 105573 / AG-3a) protein is Aspartate carbamoyltransferase catalytic subunit.